Reading from the N-terminus, the 187-residue chain is Peptidyl-tRNA hydrolase (187 aa).

Tyr-15 is a tRNA binding site. The Proton acceptor role is filled by His-20. TRNA-binding residues include Tyr-64, Asn-66, and Asn-112.

This sequence belongs to the PTH family. As to quaternary structure, monomer.

It localises to the cytoplasm. The enzyme catalyses an N-acyl-L-alpha-aminoacyl-tRNA + H2O = an N-acyl-L-amino acid + a tRNA + H(+). Its function is as follows. Hydrolyzes ribosome-free peptidyl-tRNAs (with 1 or more amino acids incorporated), which drop off the ribosome during protein synthesis, or as a result of ribosome stalling. In terms of biological role, catalyzes the release of premature peptidyl moieties from peptidyl-tRNA molecules trapped in stalled 50S ribosomal subunits, and thus maintains levels of free tRNAs and 50S ribosomes. This Phocaeicola vulgatus (strain ATCC 8482 / DSM 1447 / JCM 5826 / CCUG 4940 / NBRC 14291 / NCTC 11154) (Bacteroides vulgatus) protein is Peptidyl-tRNA hydrolase.